Consider the following 327-residue polypeptide: Mitochondrial thiamine pyrophosphate carrier 1 (327 aa).

3 Solcar repeats span residues 13–114, 126–214, and 222–317; these read GSKL…AAQL, PAAA…LRAP, and FWGG…VLRA. Transmembrane regions (helical) follow at residues 16-36, 95-111, 132-152, 189-209, 223-245, and 292-309; these read LQVV…IAPL, LLYI…YRSA, FVAG…LDLL, GIGP…AAYE, WGGQ…VFPL, and GLTV…VTMW.

The protein belongs to the mitochondrial carrier (TC 2.A.29) family.

It localises to the mitochondrion inner membrane. In terms of biological role, mitochondrial transporter that mediates uptake of thiamine pyrophosphate (ThPP) into mitochondria. This chain is Mitochondrial thiamine pyrophosphate carrier 1 (TPC1), found in Pyricularia oryzae (strain 70-15 / ATCC MYA-4617 / FGSC 8958) (Rice blast fungus).